The chain runs to 112 residues: ATP synthase epsilon chain (112 aa).

This sequence belongs to the ATPase epsilon chain family. In terms of assembly, F-type ATPases have 2 components, CF(1) - the catalytic core - and CF(0) - the membrane proton channel. CF(1) has five subunits: alpha(3), beta(3), gamma(1), delta(1), epsilon(1). CF(0) has three main subunits: a, b and c.

The protein resides in the cell membrane. Produces ATP from ADP in the presence of a proton gradient across the membrane. This Rickettsia africae (strain ESF-5) protein is ATP synthase epsilon chain.